We begin with the raw amino-acid sequence, 265 residues long: Glutamate racemase (265 aa).

Substrate-binding positions include 9–10 (DS) and 41–42 (YS). Residue Cys73 is the Proton donor/acceptor of the active site. 74-75 (NT) is a binding site for substrate. Cys184 functions as the Proton donor/acceptor in the catalytic mechanism. 185–186 (TH) lines the substrate pocket.

This sequence belongs to the aspartate/glutamate racemases family.

It catalyses the reaction L-glutamate = D-glutamate. It functions in the pathway cell wall biogenesis; peptidoglycan biosynthesis. Its function is as follows. Provides the (R)-glutamate required for cell wall biosynthesis. The polypeptide is Glutamate racemase (Actinobacillus pleuropneumoniae serotype 3 (strain JL03)).